The primary structure comprises 375 residues: MAKQNFVRSKPHINVGAIGHVDHGKTTLTAALTMYGAKKHGGKVMNYDDIDNAPEEKERGITINTRHVEYESAARHYAHVDCPGHADYVKNMITGAAQMDGAILLVAADSGPEPQTREHILLAKQVGVANLVIFLNKMDLADPELVELVEMEVRDLLNLYGFDGEKTPFIRGSAFAAMSKPDDPAATKCLDELLDTMDKYFVIPERALDKPFLMPIEDVFSISGRGTVVTGAIAQGKVKVGDTVEIVGIKPTQTTVVTGVEMFNKLLDAGQAGDNIGALLRGIEKNQVERGQVLAAPKSITPHTNFKATIYCLSKEEGGRHNPFFSGYRPQFYFRTTDVTGTVTLPEGKQMVMPGDNTELVVELITPMDKGSRFA.

Positions 10-205 (KPHINVGAIG…TMDKYFVIPE (196 aa)) constitute a tr-type G domain. Residues 19–26 (GHVDHGKT) form a G1 region. 19–26 (GHVDHGKT) contributes to the GTP binding site. Threonine 26 contacts Mg(2+). Positions 60-64 (GITIN) are G2. The tract at residues 81–84 (DCPG) is G3. Residues 81 to 85 (DCPGH) and 136 to 139 (NKMD) contribute to the GTP site. A G4 region spans residues 136-139 (NKMD). The interval 173–175 (SAF) is G5.

The protein belongs to the TRAFAC class translation factor GTPase superfamily. Classic translation factor GTPase family. EF-Tu/EF-1A subfamily. As to quaternary structure, monomer.

The protein localises to the cytoplasm. It carries out the reaction GTP + H2O = GDP + phosphate + H(+). GTP hydrolase that promotes the GTP-dependent binding of aminoacyl-tRNA to the A-site of ribosomes during protein biosynthesis. This chain is Elongation factor Tu (tuf), found in Spirochaeta aurantia.